The following is a 285-amino-acid chain: Bifunctional protein FolD (285 aa).

Residues 163–165, serine 188, and alanine 231 each bind NADP(+); that span reads GRS.

The protein belongs to the tetrahydrofolate dehydrogenase/cyclohydrolase family. In terms of assembly, homodimer.

It catalyses the reaction (6R)-5,10-methylene-5,6,7,8-tetrahydrofolate + NADP(+) = (6R)-5,10-methenyltetrahydrofolate + NADPH. The catalysed reaction is (6R)-5,10-methenyltetrahydrofolate + H2O = (6R)-10-formyltetrahydrofolate + H(+). It participates in one-carbon metabolism; tetrahydrofolate interconversion. Catalyzes the oxidation of 5,10-methylenetetrahydrofolate to 5,10-methenyltetrahydrofolate and then the hydrolysis of 5,10-methenyltetrahydrofolate to 10-formyltetrahydrofolate. The polypeptide is Bifunctional protein FolD (Oenococcus oeni (strain ATCC BAA-331 / PSU-1)).